Here is a 118-residue protein sequence, read N- to C-terminus: Small ribosomal subunit protein uS13 (118 aa).

The interval 92–118 (RKGLPVRGQRTKTNARTRKGPRKPIRK) is disordered.

This sequence belongs to the universal ribosomal protein uS13 family. In terms of assembly, part of the 30S ribosomal subunit. Forms a loose heterodimer with protein S19. Forms two bridges to the 50S subunit in the 70S ribosome.

Its function is as follows. Located at the top of the head of the 30S subunit, it contacts several helices of the 16S rRNA. In the 70S ribosome it contacts the 23S rRNA (bridge B1a) and protein L5 of the 50S subunit (bridge B1b), connecting the 2 subunits; these bridges are implicated in subunit movement. Contacts the tRNAs in the A and P-sites. This is Small ribosomal subunit protein uS13 from Pseudomonas putida (strain ATCC 700007 / DSM 6899 / JCM 31910 / BCRC 17059 / LMG 24140 / F1).